The chain runs to 177 residues: Dihydrofolate reductase type 9 (177 aa).

Residues 3–167 (SLNMIVAVNK…TKLIFQIWIN (165 aa)) form the DHFR domain.

It belongs to the dihydrofolate reductase family. In terms of assembly, homodimer.

The catalysed reaction is (6S)-5,6,7,8-tetrahydrofolate + NADP(+) = 7,8-dihydrofolate + NADPH + H(+). It participates in cofactor biosynthesis; tetrahydrofolate biosynthesis; 5,6,7,8-tetrahydrofolate from 7,8-dihydrofolate: step 1/1. Functionally, key enzyme in folate metabolism. Catalyzes an essential reaction for de novo glycine and purine synthesis, and for DNA precursor synthesis. This chain is Dihydrofolate reductase type 9 (dhfrIX), found in Escherichia coli.